The following is a 328-amino-acid chain: D-cysteine desulfhydrase (328 aa).

K51 bears the N6-(pyridoxal phosphate)lysine mark.

Belongs to the ACC deaminase/D-cysteine desulfhydrase family. As to quaternary structure, homodimer. Pyridoxal 5'-phosphate serves as cofactor.

The enzyme catalyses D-cysteine + H2O = hydrogen sulfide + pyruvate + NH4(+) + H(+). Functionally, catalyzes the alpha,beta-elimination reaction of D-cysteine and of several D-cysteine derivatives. It could be a defense mechanism against D-cysteine. The chain is D-cysteine desulfhydrase from Salmonella agona (strain SL483).